The chain runs to 475 residues: Equilibrative nucleoside transporter 3 (475 aa).

The interval 1–24 (MAVVSEDDFQHSSNSTYRTTSSSL) is disordered. Residues 1–53 (MAVVSEDDFQHSSNSTYRTTSSSLRADQEALLEKLLDRPPPGLQRPEDRFCGT) lie on the Cytoplasmic side of the membrane. The span at 12–23 (SSNSTYRTTSSS) shows a compositional bias: low complexity. Residues S21 and S23 each carry the phosphoserine modification. Positions 31–32 (LL) match the Dileucine internalization motif motif. A helical transmembrane segment spans residues 54–74 (YIIFFSLGIGSLLPWNFFITA). The Extracellular segment spans residues 75–105 (KEYWMFKLRNSSSPATGEDPEGSDILNYFES). N84 carries N-linked (GlcNAc...) asparagine glycosylation. A helical membrane pass occupies residues 106 to 126 (YLAVASTVPSMLCLVANFLLV). Over 127–134 (NRVAVHIR) the chain is Cytoplasmic. A helical membrane pass occupies residues 135 to 155 (VLASLTVILAIFMVITALVKV). Residues 156–162 (DTSSWTR) are Extracellular-facing. Residues 163 to 183 (GFFAVTIVCMVILSGASTVFS) traverse the membrane as a helical segment. The Cytoplasmic portion of the chain corresponds to 184-199 (SSIYGMTGSFPMRNSQ). Residues 200-220 (ALISGGAMGGTVSAVASLVDL) form a helical membrane-spanning segment. The Extracellular portion of the chain corresponds to 221-230 (AASSDVRNSA). The helical transmembrane segment at 231 to 251 (LAFFLTATVFLVLCMGLYLLL) threads the bilayer. Residues 252–305 (SRLEYARYYMRPVLAAHVFSGEEELPQDSLSAPSVASRFIDSHTPPLRPILKKT) lie on the Cytoplasmic side of the membrane. The chain crosses the membrane as a helical span at residues 306-326 (ASLGFCVTYVFFITSLIYPAI). Over 327–337 (CTNIESLNKGS) the chain is Extracellular. Residues 338–358 (GSLWTTKFFIPLTTFLLYNFA) traverse the membrane as a helical segment. Residues 359-377 (DLCGRQLTAWIQVPGPNSK) are Cytoplasmic-facing. The helical transmembrane segment at 378 to 398 (ALPGFVLLRTCLIPLFVLCNY) threads the bilayer. At 399 to 415 (QPRVHLKTVVFQSDVYP) the chain is on the extracellular side. A helical transmembrane segment spans residues 416–436 (ALLSSLLGLSNGYLSTLALLY). The Cytoplasmic portion of the chain corresponds to 437–454 (GPKIVPRELAEATGVVMS). Residues 455 to 475 (FYVCLGLTLGSACSTLLVHLI) traverse the membrane as a helical segment.

It belongs to the SLC29A/ENT transporter (TC 2.A.57) family. As to expression, widely expressed in both adult and fetal tissues. Highest levels in placenta, uterus, ovary, spleen, lymph node and bone marrow. Expressed in liver. Lowest levels in brain and heart. Expressed in macrophages.

It is found in the lysosome membrane. The protein resides in the late endosome membrane. It localises to the mitochondrion membrane. Its subcellular location is the cell membrane. It carries out the reaction adenosine(in) = adenosine(out). The catalysed reaction is guanosine(in) = guanosine(out). The enzyme catalyses inosine(in) = inosine(out). It catalyses the reaction uridine(out) = uridine(in). It carries out the reaction cytidine(in) = cytidine(out). The catalysed reaction is thymidine(in) = thymidine(out). The enzyme catalyses 2'-deoxyadenosine(in) = 2'-deoxyadenosine(out). It catalyses the reaction 2'-deoxycytidine(in) = 2'-deoxycytidine(out). It carries out the reaction guanine(out) = guanine(in). The catalysed reaction is uracil(in) = uracil(out). The enzyme catalyses (R)-noradrenaline(out) = (R)-noradrenaline(in). It catalyses the reaction dopamine(out) = dopamine(in). It carries out the reaction serotonin(out) = serotonin(in). The catalysed reaction is tyramine(in) = tyramine(out). The enzyme catalyses ATP(in) = ATP(out). Functionally, uniporter that mediates the facilitative transport of nucleoside across lysosomal and mitochondrial membranes. Functions as a non-electrogenic Na(+)-independent transporter. Substrate transport is pH-dependent and enhanced under acidic condition, probably reflecting the location of the transporter in acidic intracellular compartments. Proton is not a cotransporting ion but most likely change the ionization state of the transporter which dictates transport-permissible/impermissible conformation for nucleoside translocation. May direct the nucleoside transport from lysosomes to cytosol or cytosol to mitochondria to facilitate the fundamental function of salvage synthesis of nucleic acids. Involved in the transport of nucleosides (adenosine, guanosine, uridine, thymidine, cytidine and inosine) and deoxynucleosides (deoxyadenosine, deoxycytidine). Also mediates transport of purine nucleobases (adenine, guanine) and pyrimidine nucleobases (uracil). Also able to transport monoamine neurotransmitters dopamine, serotonin, noradrenaline and tyramine. Capable of transporting ATP. Mediates nucleoside export from lysosomes in macrophages, which regulates macrophage functions and numbers. The protein is Equilibrative nucleoside transporter 3 of Homo sapiens (Human).